We begin with the raw amino-acid sequence, 101 residues long: ATP-dependent Clp protease adapter protein ClpS (101 aa).

It belongs to the ClpS family. As to quaternary structure, binds to the N-terminal domain of the chaperone ClpA.

Involved in the modulation of the specificity of the ClpAP-mediated ATP-dependent protein degradation. The sequence is that of ATP-dependent Clp protease adapter protein ClpS from Treponema denticola (strain ATCC 35405 / DSM 14222 / CIP 103919 / JCM 8153 / KCTC 15104).